Reading from the N-terminus, the 384-residue chain is 4-hydroxy-3-methylbut-2-en-1-yl diphosphate synthase (flavodoxin) (384 aa).

[4Fe-4S] cluster is bound by residues cysteine 280, cysteine 283, cysteine 315, and glutamate 322.

This sequence belongs to the IspG family. [4Fe-4S] cluster is required as a cofactor.

The catalysed reaction is (2E)-4-hydroxy-3-methylbut-2-enyl diphosphate + oxidized [flavodoxin] + H2O + 2 H(+) = 2-C-methyl-D-erythritol 2,4-cyclic diphosphate + reduced [flavodoxin]. The protein operates within isoprenoid biosynthesis; isopentenyl diphosphate biosynthesis via DXP pathway; isopentenyl diphosphate from 1-deoxy-D-xylulose 5-phosphate: step 5/6. Converts 2C-methyl-D-erythritol 2,4-cyclodiphosphate (ME-2,4cPP) into 1-hydroxy-2-methyl-2-(E)-butenyl 4-diphosphate. The chain is 4-hydroxy-3-methylbut-2-en-1-yl diphosphate synthase (flavodoxin) from Parafrankia sp. (strain EAN1pec).